Consider the following 229-residue polypeptide: Large ribosomal subunit protein uL1 (229 aa).

This sequence belongs to the universal ribosomal protein uL1 family. Part of the 50S ribosomal subunit.

Its function is as follows. Binds directly to 23S rRNA. The L1 stalk is quite mobile in the ribosome, and is involved in E site tRNA release. Functionally, protein L1 is also a translational repressor protein, it controls the translation of the L11 operon by binding to its mRNA. The chain is Large ribosomal subunit protein uL1 from Pediococcus pentosaceus (strain ATCC 25745 / CCUG 21536 / LMG 10740 / 183-1w).